A 312-amino-acid chain; its full sequence is Ribosomal protein L11 methyltransferase (312 aa).

Threonine 162, glycine 183, aspartate 205, and asparagine 248 together coordinate S-adenosyl-L-methionine.

Belongs to the methyltransferase superfamily. PrmA family.

It localises to the cytoplasm. It carries out the reaction L-lysyl-[protein] + 3 S-adenosyl-L-methionine = N(6),N(6),N(6)-trimethyl-L-lysyl-[protein] + 3 S-adenosyl-L-homocysteine + 3 H(+). Functionally, methylates ribosomal protein L11. The sequence is that of Ribosomal protein L11 methyltransferase from Bacillus cereus (strain B4264).